The chain runs to 303 residues: Cytosolic Fe-S cluster assembly factor CFD1 (303 aa).

15–22 serves as a coordination point for ATP; it reads GKGGVGKS. Residues Cys-199 and Cys-202 each contribute to the [4Fe-4S] cluster site.

It belongs to the Mrp/NBP35 ATP-binding proteins family. NUBP2/CFD1 subfamily. As to quaternary structure, heterotetramer of 2 NBP35 and 2 CFD1 chains. The cofactor is [4Fe-4S] cluster.

It is found in the cytoplasm. In terms of biological role, component of the cytosolic iron-sulfur (Fe/S) protein assembly (CIA) machinery. Required for maturation of extramitochondrial Fe-S proteins. The NBP35-CFD1 heterotetramer forms a Fe-S scaffold complex, mediating the de novo assembly of an Fe-S cluster and its transfer to target apoproteins. This chain is Cytosolic Fe-S cluster assembly factor CFD1, found in Chaetomium globosum (strain ATCC 6205 / CBS 148.51 / DSM 1962 / NBRC 6347 / NRRL 1970) (Soil fungus).